The sequence spans 264 residues: 3-methyl-2-oxobutanoate hydroxymethyltransferase (264 aa).

Residues aspartate 45 and aspartate 84 each contribute to the Mg(2+) site. 3-methyl-2-oxobutanoate is bound by residues 45 to 46 (DS), aspartate 84, and lysine 112. Glutamate 114 provides a ligand contact to Mg(2+). Catalysis depends on glutamate 181, which acts as the Proton acceptor.

This sequence belongs to the PanB family. As to quaternary structure, homodecamer; pentamer of dimers. Requires Mg(2+) as cofactor.

Its subcellular location is the cytoplasm. The enzyme catalyses 3-methyl-2-oxobutanoate + (6R)-5,10-methylene-5,6,7,8-tetrahydrofolate + H2O = 2-dehydropantoate + (6S)-5,6,7,8-tetrahydrofolate. The protein operates within cofactor biosynthesis; (R)-pantothenate biosynthesis; (R)-pantoate from 3-methyl-2-oxobutanoate: step 1/2. Its function is as follows. Catalyzes the reversible reaction in which hydroxymethyl group from 5,10-methylenetetrahydrofolate is transferred onto alpha-ketoisovalerate to form ketopantoate. The chain is 3-methyl-2-oxobutanoate hydroxymethyltransferase from Aliivibrio fischeri (strain MJ11) (Vibrio fischeri).